We begin with the raw amino-acid sequence, 345 residues long: Phosphoribosylformylglycinamidine cyclo-ligase (345 aa).

The protein belongs to the AIR synthase family.

It is found in the cytoplasm. The catalysed reaction is 2-formamido-N(1)-(5-O-phospho-beta-D-ribosyl)acetamidine + ATP = 5-amino-1-(5-phospho-beta-D-ribosyl)imidazole + ADP + phosphate + H(+). It participates in purine metabolism; IMP biosynthesis via de novo pathway; 5-amino-1-(5-phospho-D-ribosyl)imidazole from N(2)-formyl-N(1)-(5-phospho-D-ribosyl)glycinamide: step 2/2. This is Phosphoribosylformylglycinamidine cyclo-ligase from Methanopyrus kandleri (strain AV19 / DSM 6324 / JCM 9639 / NBRC 100938).